A 504-amino-acid polypeptide reads, in one-letter code: Probable periplasmic serine endoprotease DegP-like (504 aa).

The first 26 residues, 1 to 26 (MLKTTTVAGLAAVLLTTGLPAEVAQS), serve as a signal peptide directing secretion. Residues 102–118 (RADRWRDRRGPRGEGRL) show a composition bias toward basic and acidic residues. The tract at residues 102–122 (RADRWRDRRGPRGEGRLRPRA) is disordered. Positions 113–286 (RGEGRLRPRA…PASVAKDVVD (174 aa)) are serine protease. Active-site charge relay system residues include histidine 140, aspartate 170, and serine 244. Residues 242 to 244 (GNS) and 299 to 303 (LGVQI) contribute to the substrate site. PDZ domains follow at residues 287–378 (SLIK…LWRS) and 401–491 (ATGE…IEAQ). 2 disordered regions span residues 389–411 (GTLP…DEGQ) and 428–447 (EDGK…AGDR).

It belongs to the peptidase S1C family.

Its subcellular location is the periplasm. The catalysed reaction is Acts on substrates that are at least partially unfolded. The cleavage site P1 residue is normally between a pair of hydrophobic residues, such as Val-|-Val.. Might be efficient in the degradation of transiently denatured and unfolded proteins which accumulate in the periplasm following stress conditions. The chain is Probable periplasmic serine endoprotease DegP-like (degP1) from Rhizobium meliloti (strain 1021) (Ensifer meliloti).